The following is an 89-amino-acid chain: Small ribosomal subunit protein uS17 (89 aa).

The protein belongs to the universal ribosomal protein uS17 family. Part of the 30S ribosomal subunit.

Functionally, one of the primary rRNA binding proteins, it binds specifically to the 5'-end of 16S ribosomal RNA. The sequence is that of Small ribosomal subunit protein uS17 from Xylella fastidiosa (strain Temecula1 / ATCC 700964).